We begin with the raw amino-acid sequence, 434 residues long: Pancreatic lipase-related protein 2 (434 aa).

A disulfide bridge connects residues C4 and C10. The required for galactolipase activity stretch occupies residues I76 to L88. A disulfide bond links C92 and C103. The active-site Nucleophile is the S154. Residue D178 is the Charge relay system of the active site. Ca(2+)-binding residues include E189, R192, D194, and D197. Residues C239 and C245 are joined by a disulfide bond. Residues K240–S244 are required for galactolipase activity. H247 (charge relay system) is an active-site residue. Intrachain disulfides connect C269–C280 and C283–C288. Residue N318 is glycosylated (N-linked (GlcNAc...) asparagine). The PLAT domain occupies W322 to C434. A disulfide bridge links C418 with C434.

Belongs to the AB hydrolase superfamily. Lipase family. As to expression, pancreas.

The protein localises to the secreted. It is found in the zymogen granule membrane. Its subcellular location is the cell projection. It localises to the neuron projection. It catalyses the reaction a triacylglycerol + H2O = a diacylglycerol + a fatty acid + H(+). The enzyme catalyses a 1,2-diacyl-3-O-(beta-D-galactosyl)-sn-glycerol + 2 H2O = 3-beta-D-galactosyl-sn-glycerol + 2 a fatty acid + 2 H(+). It carries out the reaction 1,2,3-tri-(9Z-octadecenoyl)-glycerol + H2O = di-(9Z)-octadecenoylglycerol + (9Z)-octadecenoate + H(+). The catalysed reaction is di-(9Z)-octadecenoylglycerol + H2O = (9Z-octadecenoyl)-glycerol + (9Z)-octadecenoate + H(+). It catalyses the reaction (9Z-octadecenoyl)-glycerol + H2O = glycerol + (9Z)-octadecenoate + H(+). The enzyme catalyses 1-(9Z-octadecenoyl)-glycerol + H2O = glycerol + (9Z)-octadecenoate + H(+). It carries out the reaction 1,2,3-tripropanoylglycerol + H2O = dipropanoylglycerol + propanoate + H(+). The catalysed reaction is 1,2,3-tributanoylglycerol + H2O = dibutanoylglycerol + butanoate + H(+). It catalyses the reaction 1,2,3-trioctanoylglycerol + H2O = dioctanoylglycerol + octanoate + H(+). The enzyme catalyses 1,2-didecanoylglycerol + H2O = decanoylglycerol + decanoate + H(+). It carries out the reaction long chain 1,2-diacyl-3-O-beta-D-galactosyl-sn-glycerol + H2O = long chain acyl-3-O-beta-D-galactosyl-sn-glycerol + a fatty acid + H(+). The catalysed reaction is 1,2-dioctanoyl-3-O-beta-D-galactosyl-sn-glycerol + H2O = octanoyl-3-(beta-D-galactosyl)-sn-glycerol + octanoate + H(+). It catalyses the reaction 1,2-didodecanoyl-3-beta-D-galactosyl-sn-glycerol + H2O = dodecanoyl-3-beta-D-galactosyl-sn-glycerol + dodecanoate + H(+). The enzyme catalyses 1-beta-D-galactosyl-2,3-didodecanoyl-sn-glycerol + H2O = 1-beta-D-galactosyl-dodecanoyl-sn-glycerol + dodecanoate + H(+). It carries out the reaction a 1,2-diacyl-3-O-[alpha-D-galactosyl-(1-&gt;6)-beta-D-galactosyl]-sn-glycerol + H2O = acyl-3-O-[alpha-D-galactosyl-(1-&gt;6)-beta-D-galactosyl]-sn-glycerol + a fatty acid + H(+). The catalysed reaction is long chain 1,2-diacyl-3-O-[alpha-D-galactosyl-(1-&gt;6)-beta-D-galactosyl]-sn-glycerol + H2O = long chain acyl-3-O-[alpha-D-galactosyl-(1-&gt;6)-beta-D-galactosyl]-sn-glycerol + a fatty acid + H(+). It catalyses the reaction 1,2-dioctanoyl-3-O-[alpha-D-galactosyl-(1-&gt;6)-beta-D-galactosyl]-sn-glycerol + H2O = octanoyl-3-O-[alpha-D-galactosyl-(1-&gt;6)-beta-D-galactosyl]-sn-glycerol + octanoate + H(+). The enzyme catalyses 1,2-didodecanoyl-3-O-[alpha-D-galactosyl-(1-&gt;6)-beta-D-galactosyl]-sn-glycerol + H2O = dodecanoyl-3-O-[alpha-D-galactosyl-(1-&gt;6)-beta-D-galactosyl]-sn-glycerol + dodecanoate + H(+). It carries out the reaction a 1,2-diacyl-sn-glycero-3-phosphocholine + H2O = a monoacyl-sn-glycero-3-phosphocholine + a fatty acid + H(+). It functions in the pathway glycerolipid metabolism; triacylglycerol degradation. The protein operates within glycolipid metabolism. CLPS stimulates triacylglycerol lipase activity. Not inhibited by bile salts. In terms of biological role, lipase that primarily hydrolyzes triglycerides and galactosylglycerides. In neonates, may play a major role in pancreatic digestion of dietary fats such as milk fat globules enriched in long-chain triglycerides. Hydrolyzes short-, medium- and long-chain fatty acyls in triglycerides without apparent positional specificity. Can completely deacylate triacylglycerols. When the liver matures and bile salt synthesis increases, likely functions mainly as a galactolipase and monoacylglycerol lipase. Hydrolyzes monogalactosyldiglycerols (MGDG) and digalactosyldiacylglycerols (DGDG) present in a plant-based diet, releasing long-chain polyunsaturated fatty acids. Hydrolyzes medium- and long-chain fatty acyls in galactolipids. May act together with LIPF to hydrolyze partially digested triglycerides. Hydrolyzes long-chain monoglycerides with high efficiency. In cytotoxic T cells, contributes to perforin-dependent cell lysis, but is unlikely to mediate direct cytotoxicity. Also has low phospholipase activity. In neurons, required for the localization of the phospholipid 1-oleoyl-2-palmitoyl-PC (OPPC) to neurite tips through acyl chain remodeling of membrane phospholipids. The resulting OPPC-rich lipid membrane domain recruits the t-SNARE protein STX4 by selectively interacting with the STX4 transmembrane domain and this promotes surface expression of the dopamine transporter SLC6A3/DAT at neurite tips by facilitating fusion of SLC6A3-containing transport vesicles with the plasma membrane. The protein is Pancreatic lipase-related protein 2 of Cavia porcellus (Guinea pig).